We begin with the raw amino-acid sequence, 461 residues long: tRNA modification GTPase MnmE (461 aa).

(6S)-5-formyl-5,6,7,8-tetrahydrofolate contacts are provided by Arg-27, Glu-89, and Arg-128. The 159-residue stretch at 224 to 382 (GLATAIVGRP…LENAIEQLFF (159 aa)) folds into the TrmE-type G domain. Asn-234 serves as a coordination point for K(+). GTP is bound by residues 234-239 (NVGKSS), 253-259 (TDIAGTT), and 278-281 (DTAG). Ser-238 serves as a coordination point for Mg(2+). Residues Thr-253, Ile-255, and Thr-258 each coordinate K(+). Thr-259 is a Mg(2+) binding site. (6S)-5-formyl-5,6,7,8-tetrahydrofolate is bound at residue Lys-461.

It belongs to the TRAFAC class TrmE-Era-EngA-EngB-Septin-like GTPase superfamily. TrmE GTPase family. As to quaternary structure, homodimer. Heterotetramer of two MnmE and two MnmG subunits. K(+) is required as a cofactor.

It is found in the cytoplasm. Functionally, exhibits a very high intrinsic GTPase hydrolysis rate. Involved in the addition of a carboxymethylaminomethyl (cmnm) group at the wobble position (U34) of certain tRNAs, forming tRNA-cmnm(5)s(2)U34. This Lactobacillus johnsonii (strain CNCM I-12250 / La1 / NCC 533) protein is tRNA modification GTPase MnmE.